A 286-amino-acid polypeptide reads, in one-letter code: MSAEILDGKSLALKIKEELKKEVQDLKNQGINPCLAVVLVGENKSSQKYVSFKEKTCKELDIQSLVFKLPENTEETSLIKLIDELNENSQVNGILIQLPLPKHLNQNKVLERINPFKDVDGFTPFCLGRLLIDSPLFIPCTPKGIIRMLDEYKINLEGKQAVVIGRSIIVGKPLSLLLLKRNATVTMCHSKTINLQDITKKADILCVAIGREKFITSNMIKKGAVVIDIGINVTASGKVVGDVNFDDVKEKASYITPVPGGVGPMTIAMLMENAIYAAKLQKRVVK.

NADP(+)-binding positions include 165 to 167 (GRS), serine 190, and isoleucine 231.

Belongs to the tetrahydrofolate dehydrogenase/cyclohydrolase family. Homodimer.

The catalysed reaction is (6R)-5,10-methylene-5,6,7,8-tetrahydrofolate + NADP(+) = (6R)-5,10-methenyltetrahydrofolate + NADPH. It carries out the reaction (6R)-5,10-methenyltetrahydrofolate + H2O = (6R)-10-formyltetrahydrofolate + H(+). It functions in the pathway one-carbon metabolism; tetrahydrofolate interconversion. In terms of biological role, catalyzes the oxidation of 5,10-methylenetetrahydrofolate to 5,10-methenyltetrahydrofolate and then the hydrolysis of 5,10-methenyltetrahydrofolate to 10-formyltetrahydrofolate. The chain is Bifunctional protein FolD from Thermodesulfovibrio yellowstonii (strain ATCC 51303 / DSM 11347 / YP87).